The chain runs to 134 residues: D-ribose pyranase (134 aa).

Residue His20 is the Proton donor of the active site. Residues Asp28, His101, and 123 to 125 (YCN) contribute to the substrate site.

The protein belongs to the RbsD / FucU family. RbsD subfamily. In terms of assembly, homodecamer.

It is found in the cytoplasm. The catalysed reaction is beta-D-ribopyranose = beta-D-ribofuranose. The protein operates within carbohydrate metabolism; D-ribose degradation; D-ribose 5-phosphate from beta-D-ribopyranose: step 1/2. Functionally, catalyzes the interconversion of beta-pyran and beta-furan forms of D-ribose. The polypeptide is D-ribose pyranase (Pseudomonas fluorescens (strain Pf0-1)).